The sequence spans 335 residues: Abasic site processing protein HMCES (335 aa).

Residue Cys2 is the Nucleophile of the active site. Thiazolidine linkage to a ring-opened DNA abasic site is present on Cys2. Residues 24-39 are compositionally biased toward basic and acidic residues; sequence QGGRKWPNWRDGDSDK. The interval 24 to 51 is disordered; the sequence is QGGRKWPNWRDGDSDKYQPSYNKSPQSN. The span at 40 to 51 shows a compositional bias: polar residues; the sequence is YQPSYNKSPQSN. Residue Glu129 is part of the active site. Residues 284–335 form a disordered region; sequence LQNKSPKKEESHSIQSPKLSQFGAPPKKTSAGLMQQWLKKEDGEPSPKRAKK. The segment covering 321-335 has biased composition (basic and acidic residues); the sequence is LKKEDGEPSPKRAKK.

This sequence belongs to the SOS response-associated peptidase family. Post-translationally, ubiquitination of the hmces DNA-protein cross-link by rfwd3 may promotes its degradation.

It localises to the chromosome. Formation and reversal of DNA-protein cross-link depends on DNA context. Catalyzes formation of the thiazolidine linkage in presence of abasic sites in single-stranded DNA. Mediates the reversal of the thiazolidine cross-link in presence of double stranded DNA. Sensor of abasic sites in single-stranded DNA (ssDNA) required to preserve genome integrity by promoting error-free repair of abasic sites. Acts as an enzyme that recognizes and binds abasic sites in ssDNA at replication forks and chemically modifies the lesion by forming a covalent cross-link with DNA: forms a stable thiazolidine linkage between a ring-opened abasic site and the alpha-amino and sulfhydryl substituents of its N-terminal catalytic cysteine residue. The hmces DNA-protein cross-link is then either reversed or degraded. Hmces is able to catalyze the reversal of its thiazolidine cross-link and cycle between a cross-link and a non-cross-linked state depending on DNA context: mediates self-reversal of the thiazolidine cross-link in double stranded DNA, allowing apex1 to initiate downstream repair of abasic sites. The hmces DNA-protein cross-link can also be degraded by the sprtn metalloprotease following unfolding by the brip1/fancj helicase. Promotes error-free repair of abasic sites by protecting abasic sites from translesion synthesis (TLS) polymerases and endonucleases that are error-prone and would generate mutations and double-strand breaks. Acts as a protease: mediates autocatalytic processing of its N-terminal methionine in order to expose the catalytic cysteine. The hmces DNA-protein cross-link is then either reversed or degraded. According to a model, the HMCES DNA-protein cross-link. In Xenopus tropicalis (Western clawed frog), this protein is Abasic site processing protein HMCES.